The chain runs to 412 residues: Esterase EstD (412 aa).

Positions 1 to 20 are cleaved as a signal peptide; it reads MRLTVFLSLFLGVMVFGAFD. Serine 243 (nucleophile) is an active-site residue. Residues aspartate 347 and histidine 378 each act as charge relay system in the active site.

This sequence belongs to the AB hydrolase superfamily. Esterase 10 family. In terms of assembly, exists mainly as a monomer and, to some extent as a dimer.

The enzyme catalyses a carboxylic ester + H2O = an alcohol + a carboxylate + H(+). With respect to regulation, is strongly inhibited by phenylmethylsulfonyl fluoride, a serine protease inhibitor, and by mercury chloride. Diethyl pyrocarbonate, a histidine modifier, also inhibits the reaction, albeit less pronounced than phenylmethylsulfonyl fluoride. EDTA and dithiothreitol have no effect on enzyme activity. In terms of biological role, exhibits significant esterase activity with a preference for short acyl chain esters (C4-C8) in vitro. Its physiological function is not known. Displays neither proteolytic activity using casein as substrate, nor peptidase activity when assayed with L-leucine p-nitroanilide and L-proline p-nitroanilide. This is Esterase EstD from Thermotoga maritima (strain ATCC 43589 / DSM 3109 / JCM 10099 / NBRC 100826 / MSB8).